Consider the following 425-residue polypeptide: F-box/LRR-repeat protein At3g59250 (425 aa).

Residues 6-54 enclose the F-box domain; that stretch reads KDKISNLPEALICHILSFLPIEDSALTSVLSKRWRYLFAFRPNLVFDDS. LRR repeat units lie at residues 86–113, 138–163, 185–210, 264–293, and 294–319; these read DLQV…RIES, MLGK…VLNN, CTES…KYSD, CLSA…TIKT, and NQSV…VFEG.

The polypeptide is F-box/LRR-repeat protein At3g59250 (Arabidopsis thaliana (Mouse-ear cress)).